A 185-amino-acid polypeptide reads, in one-letter code: MAQGHGDAKGTTAHTEAGGGHKAPFPPFQQETFASQLVSLAIAFVALYLIVSKIALPRVGGVIEERQKTIDGDLAAAQKLKGEADDALKAYEAELADARARAQAIGAETREKLNAQAEAERKTLEQRLAAKLADAEKTIATTRTAAMGNVRNIASDAASAIVQQLAGVTPDSKAVDSAVDASLKG.

The tract at residues 1 to 26 is disordered; it reads MAQGHGDAKGTTAHTEAGGGHKAPFP. Residues 37–57 traverse the membrane as a helical segment; sequence LVSLAIAFVALYLIVSKIALP.

Belongs to the ATPase B chain family. In terms of assembly, F-type ATPases have 2 components, F(1) - the catalytic core - and F(0) - the membrane proton channel. F(1) has five subunits: alpha(3), beta(3), gamma(1), delta(1), epsilon(1). F(0) has three main subunits: a(1), b(2) and c(10-14). The alpha and beta chains form an alternating ring which encloses part of the gamma chain. F(1) is attached to F(0) by a central stalk formed by the gamma and epsilon chains, while a peripheral stalk is formed by the delta and b chains.

It is found in the cell inner membrane. Its function is as follows. F(1)F(0) ATP synthase produces ATP from ADP in the presence of a proton or sodium gradient. F-type ATPases consist of two structural domains, F(1) containing the extramembraneous catalytic core and F(0) containing the membrane proton channel, linked together by a central stalk and a peripheral stalk. During catalysis, ATP synthesis in the catalytic domain of F(1) is coupled via a rotary mechanism of the central stalk subunits to proton translocation. In terms of biological role, component of the F(0) channel, it forms part of the peripheral stalk, linking F(1) to F(0). The b'-subunit is a diverged and duplicated form of b found in plants and photosynthetic bacteria. This chain is ATP synthase subunit b 2 (atpF2), found in Rhodopseudomonas palustris (strain ATCC BAA-98 / CGA009).